Here is a 269-residue protein sequence, read N- to C-terminus: Glutamate 5-kinase (269 aa).

Position 14 (lysine 14) interacts with ATP. Residues serine 54, aspartate 141, and asparagine 157 each coordinate substrate. ATP is bound by residues 177-178 and 219-225; these read SD and TGGMVTK.

The protein belongs to the glutamate 5-kinase family.

The protein localises to the cytoplasm. The enzyme catalyses L-glutamate + ATP = L-glutamyl 5-phosphate + ADP. Its pathway is amino-acid biosynthesis; L-proline biosynthesis; L-glutamate 5-semialdehyde from L-glutamate: step 1/2. Its function is as follows. Catalyzes the transfer of a phosphate group to glutamate to form L-glutamate 5-phosphate. This chain is Glutamate 5-kinase, found in Clostridium perfringens (strain 13 / Type A).